A 1162-amino-acid polypeptide reads, in one-letter code: Carbamoyl phosphate synthase large chain (1162 aa).

The carboxyphosphate synthetic domain stretch occupies residues Met1–Glu456. The ATP site is built by Arg129, Arg222, Gly228, Gly229, Glu261, Val263, Glu268, Gly294, Val295, His296, Gln338, and Glu352. In terms of domain architecture, ATP-grasp 1 spans Glu186 to Val381. Mg(2+)-binding residues include Gln338, Glu352, and Asn354. The Mn(2+) site is built by Gln338, Glu352, and Asn354. Residues Thr457–Ala613 form an oligomerization domain region. Positions Glu614–Gly1025 are carbamoyl phosphate synthetic domain. Residues Gln742–Ala954 form the ATP-grasp 2 domain. 10 residues coordinate ATP: Arg778, Thr838, Leu840, Glu845, Gly870, Ile871, His872, Ser873, Gln913, and Glu925. Residues Gln913, Glu925, and Asn927 each coordinate Mg(2+). Residues Gln913, Glu925, and Asn927 each coordinate Mn(2+). Positions Val1026–Ser1162 constitute an MGS-like domain. The allosteric domain stretch occupies residues Val1026–Ser1162.

Belongs to the CarB family. In terms of assembly, composed of two chains; the small (or glutamine) chain promotes the hydrolysis of glutamine to ammonia, which is used by the large (or ammonia) chain to synthesize carbamoyl phosphate. Tetramer of heterodimers (alpha,beta)4. It depends on Mg(2+) as a cofactor. Requires Mn(2+) as cofactor.

It carries out the reaction hydrogencarbonate + L-glutamine + 2 ATP + H2O = carbamoyl phosphate + L-glutamate + 2 ADP + phosphate + 2 H(+). The enzyme catalyses hydrogencarbonate + NH4(+) + 2 ATP = carbamoyl phosphate + 2 ADP + phosphate + 2 H(+). Its pathway is amino-acid biosynthesis; L-arginine biosynthesis; carbamoyl phosphate from bicarbonate: step 1/1. The protein operates within pyrimidine metabolism; UMP biosynthesis via de novo pathway; (S)-dihydroorotate from bicarbonate: step 1/3. Large subunit of the glutamine-dependent carbamoyl phosphate synthetase (CPSase). CPSase catalyzes the formation of carbamoyl phosphate from the ammonia moiety of glutamine, carbonate, and phosphate donated by ATP, constituting the first step of 2 biosynthetic pathways, one leading to arginine and/or urea and the other to pyrimidine nucleotides. The large subunit (synthetase) binds the substrates ammonia (free or transferred from glutamine from the small subunit), hydrogencarbonate and ATP and carries out an ATP-coupled ligase reaction, activating hydrogencarbonate by forming carboxy phosphate which reacts with ammonia to form carbamoyl phosphate. This Brucella suis biovar 1 (strain 1330) protein is Carbamoyl phosphate synthase large chain.